The primary structure comprises 144 residues: Large ribosomal subunit protein uL15 (144 aa).

Residues 1–54 (MRLNTLSPAEGSKKAGKRLGRGIGSGLGKTGGRGHKGQKSRSGGGVRRGFEGGQ) form a disordered region. Positions 21–31 (RGIGSGLGKTG) are enriched in gly residues.

This sequence belongs to the universal ribosomal protein uL15 family. In terms of assembly, part of the 50S ribosomal subunit.

Its function is as follows. Binds to the 23S rRNA. The protein is Large ribosomal subunit protein uL15 of Salmonella arizonae (strain ATCC BAA-731 / CDC346-86 / RSK2980).